We begin with the raw amino-acid sequence, 668 residues long: UvrABC system protein B (668 aa).

The 241-residue stretch at 36–276 (DNIKGGEKAQ…EEAIKNIMEE (241 aa)) folds into the Helicase ATP-binding domain. Residue 49–56 (GATGTGKT) participates in ATP binding. The Beta-hairpin motif lies at 102-125 (YYDYYQPEAYVPSSDTYIEKDSSV). Residues 440 to 606 (QMDDLLGEIN…TIKKEIRDLI (167 aa)) form the Helicase C-terminal domain. The UVR domain maps to 632-667 (QEAIKKLQKQMHEAAELLDFELAAQIRDMVLELKSM).

It belongs to the UvrB family. As to quaternary structure, forms a heterotetramer with UvrA during the search for lesions. Interacts with UvrC in an incision complex.

The protein localises to the cytoplasm. The UvrABC repair system catalyzes the recognition and processing of DNA lesions. A damage recognition complex composed of 2 UvrA and 2 UvrB subunits scans DNA for abnormalities. Upon binding of the UvrA(2)B(2) complex to a putative damaged site, the DNA wraps around one UvrB monomer. DNA wrap is dependent on ATP binding by UvrB and probably causes local melting of the DNA helix, facilitating insertion of UvrB beta-hairpin between the DNA strands. Then UvrB probes one DNA strand for the presence of a lesion. If a lesion is found the UvrA subunits dissociate and the UvrB-DNA preincision complex is formed. This complex is subsequently bound by UvrC and the second UvrB is released. If no lesion is found, the DNA wraps around the other UvrB subunit that will check the other stand for damage. In Streptococcus thermophilus (strain ATCC BAA-491 / LMD-9), this protein is UvrABC system protein B.